Reading from the N-terminus, the 145-residue chain is Actin-related protein 4A (145 aa).

The tract at residues 47–66 (IDDAANTTEDAKESDKEKGK) is disordered. The segment covering 55-64 (EDAKESDKEK) has biased composition (basic and acidic residues).

The protein belongs to the actin family. ARP4 subfamily. In terms of tissue distribution, expressed in roots, leaves and flowers.

The protein is Actin-related protein 4A (ARP4A) of Arabidopsis thaliana (Mouse-ear cress).